The primary structure comprises 132 residues: Small ribosomal subunit protein uS8c (132 aa).

This sequence belongs to the universal ribosomal protein uS8 family. In terms of assembly, part of the 30S ribosomal subunit.

Its subcellular location is the plastid. The protein localises to the chloroplast. One of the primary rRNA binding proteins, it binds directly to 16S rRNA central domain where it helps coordinate assembly of the platform of the 30S subunit. The protein is Small ribosomal subunit protein uS8c (rps8) of Buxus microphylla (Littleleaf boxwood).